Here is a 338-residue protein sequence, read N- to C-terminus: MLQEAIKKIVSKENLEEREAYAVMNEIMSGNATPSLIGGILIGLRLKGESVEEITGFAKAMRDNAIKLELASDYVIDTCGTGGDGGKTFNISTAVAIIASAAGVKVAKHGNRAVSSKSGSADVLMELGFDIEMVPEKTKRLIEEKGMGFLFAPKYHVAMKNVAGIRKELGTRTVFNVLGPLTNPAFVKGQVLGVYDKELTHPLAEVLLRLGTEKAMVVHGFDGLDEITTTSPTFVSEVKEGKVIDYVIDPEDYGIPYAKLEDLEGKDAKENAQIILNILKGEKGPKRDIVVLNAAAALYIGKVVEDLKEGIKVANYLIDTGLALDKLTEILEYQRRLN.

Residues Gly-80, 83-84 (GD), Thr-88, 90-93 (NIST), 108-116 (KHGNRAVSS), and Ser-120 contribute to the 5-phospho-alpha-D-ribose 1-diphosphate site. Gly-80 is an anthranilate binding site. A Mg(2+)-binding site is contributed by Ser-92. Asn-111 is an anthranilate binding site. Arg-166 lines the anthranilate pocket. Mg(2+) is bound by residues Asp-225 and Glu-226.

The protein belongs to the anthranilate phosphoribosyltransferase family. In terms of assembly, homodimer. Requires Mg(2+) as cofactor.

It carries out the reaction N-(5-phospho-beta-D-ribosyl)anthranilate + diphosphate = 5-phospho-alpha-D-ribose 1-diphosphate + anthranilate. The protein operates within amino-acid biosynthesis; L-tryptophan biosynthesis; L-tryptophan from chorismate: step 2/5. Functionally, catalyzes the transfer of the phosphoribosyl group of 5-phosphorylribose-1-pyrophosphate (PRPP) to anthranilate to yield N-(5'-phosphoribosyl)-anthranilate (PRA). This Thermoanaerobacter sp. (strain X514) protein is Anthranilate phosphoribosyltransferase.